The chain runs to 179 residues: Cell division protein ZapC (179 aa).

It belongs to the ZapC family. As to quaternary structure, interacts directly with FtsZ.

Its subcellular location is the cytoplasm. Its function is as follows. Contributes to the efficiency of the cell division process by stabilizing the polymeric form of the cell division protein FtsZ. Acts by promoting interactions between FtsZ protofilaments and suppressing the GTPase activity of FtsZ. This is Cell division protein ZapC from Tolumonas auensis (strain DSM 9187 / NBRC 110442 / TA 4).